The following is a 1072-amino-acid chain: Serine/threonine-protein kinase 11-interacting protein (1072 aa).

8 LRR repeats span residues Ser109–Tyr130, Gln132–Cys152, Ala164–Leu185, Ala187–Cys209, Glu210–Gly231, Ala233–Lys254, Asn255–Trp276, and Glu280–Thr301. A disordered region spans residues Asp333–Ser366. Residues Ser388, Ser390, and Ser393 each carry the phosphoserine modification. The span at Met441–Leu454 shows a compositional bias: polar residues. Disordered stretches follow at residues Met441 to Ala522 and Arg741 to Pro762. Basic and acidic residues-rich tracts occupy residues Lys478–Pro492 and Glu501–Glu510. A phosphoserine mark is found at Ser757, Ser761, and Ser763. Residues His967–Gln993 form a disordered region.

This sequence belongs to the STK11IP family. In terms of assembly, found in a ternary complex composed of STK11/LKB1, STK11IP and SMAD4. Interacts with SMAD4. Interacts with STK11/LKB1.

It is found in the cytoplasm. May regulate STK11/LKB1 function by controlling its subcellular localization. This chain is Serine/threonine-protein kinase 11-interacting protein (Stk11ip), found in Mus musculus (Mouse).